Here is a 346-residue protein sequence, read N- to C-terminus: N-acetyl-gamma-glutamyl-phosphate reductase (346 aa).

C149 is an active-site residue.

This sequence belongs to the NAGSA dehydrogenase family. Type 1 subfamily.

It localises to the cytoplasm. The enzyme catalyses N-acetyl-L-glutamate 5-semialdehyde + phosphate + NADP(+) = N-acetyl-L-glutamyl 5-phosphate + NADPH + H(+). The protein operates within amino-acid biosynthesis; L-arginine biosynthesis; N(2)-acetyl-L-ornithine from L-glutamate: step 3/4. Functionally, catalyzes the NADPH-dependent reduction of N-acetyl-5-glutamyl phosphate to yield N-acetyl-L-glutamate 5-semialdehyde. This Geobacter metallireducens (strain ATCC 53774 / DSM 7210 / GS-15) protein is N-acetyl-gamma-glutamyl-phosphate reductase.